The sequence spans 328 residues: Beta-ketoacyl-[acyl-carrier-protein] synthase III (328 aa).

Active-site residues include cysteine 122 and histidine 255. Residues 256–260 (QANIR) are ACP-binding. Asparagine 285 is a catalytic residue.

This sequence belongs to the thiolase-like superfamily. FabH family. As to quaternary structure, homodimer.

Its subcellular location is the cytoplasm. The enzyme catalyses malonyl-[ACP] + acetyl-CoA + H(+) = 3-oxobutanoyl-[ACP] + CO2 + CoA. It functions in the pathway lipid metabolism; fatty acid biosynthesis. Functionally, catalyzes the condensation reaction of fatty acid synthesis by the addition to an acyl acceptor of two carbons from malonyl-ACP. Catalyzes the first condensation reaction which initiates fatty acid synthesis and may therefore play a role in governing the total rate of fatty acid production. Possesses both acetoacetyl-ACP synthase and acetyl transacylase activities. Its substrate specificity determines the biosynthesis of branched-chain and/or straight-chain of fatty acids. In Janthinobacterium sp. (strain Marseille) (Minibacterium massiliensis), this protein is Beta-ketoacyl-[acyl-carrier-protein] synthase III.